We begin with the raw amino-acid sequence, 92 residues long: Small ribosomal subunit protein uS19 (92 aa).

The protein belongs to the universal ribosomal protein uS19 family.

In terms of biological role, protein S19 forms a complex with S13 that binds strongly to the 16S ribosomal RNA. In Azorhizobium caulinodans (strain ATCC 43989 / DSM 5975 / JCM 20966 / LMG 6465 / NBRC 14845 / NCIMB 13405 / ORS 571), this protein is Small ribosomal subunit protein uS19.